The primary structure comprises 393 residues: Ornithine decarboxylase 2 (393 aa).

Lysine 62 is subject to N6-(pyridoxal phosphate)lysine. Residues serine 194, glycine 231, and 265–268 contribute to the pyridoxal 5'-phosphate site; that span reads EPGR. 314–315 serves as a coordination point for substrate; that stretch reads YY. Catalysis depends on cysteine 343, which acts as the Proton donor; shared with dimeric partner. Aspartate 344 contributes to the substrate binding site. Residue tyrosine 371 participates in pyridoxal 5'-phosphate binding.

Belongs to the Orn/Lys/Arg decarboxylase class-II family. As to quaternary structure, homodimer. Only the dimer is catalytically active, as the active sites are constructed of residues from both monomers. Requires pyridoxal 5'-phosphate as cofactor.

The catalysed reaction is L-ornithine + H(+) = putrescine + CO2. It participates in amine and polyamine biosynthesis; putrescine biosynthesis via L-ornithine pathway; putrescine from L-ornithine: step 1/1. Inhibited by antizyme (AZ) in response to polyamine levels. AZ inhibits the assembly of the functional homodimer by binding to ODC monomers and targeting them for ubiquitin-independent proteolytic destruction by the 26S proteasome. Catalyzes the first and rate-limiting step of polyamine biosynthesis that converts ornithine into putrescine, which is the precursor for the polyamines, spermidine and spermine. Polyamines are essential for cell proliferation and are implicated in cellular processes, ranging from DNA replication to apoptosis. The polypeptide is Ornithine decarboxylase 2 (Odc2) (Drosophila melanogaster (Fruit fly)).